The primary structure comprises 212 residues: Protein-L-isoaspartate O-methyltransferase (212 aa).

Residue serine 60 is part of the active site.

It belongs to the methyltransferase superfamily. L-isoaspartyl/D-aspartyl protein methyltransferase family.

It localises to the cytoplasm. The catalysed reaction is [protein]-L-isoaspartate + S-adenosyl-L-methionine = [protein]-L-isoaspartate alpha-methyl ester + S-adenosyl-L-homocysteine. Catalyzes the methyl esterification of L-isoaspartyl residues in peptides and proteins that result from spontaneous decomposition of normal L-aspartyl and L-asparaginyl residues. It plays a role in the repair and/or degradation of damaged proteins. This is Protein-L-isoaspartate O-methyltransferase from Methanococcus maripaludis (strain C5 / ATCC BAA-1333).